Reading from the N-terminus, the 55-residue chain is Large ribosomal subunit protein bL33 (55 aa).

This sequence belongs to the bacterial ribosomal protein bL33 family.

The protein is Large ribosomal subunit protein bL33 of Paraburkholderia phytofirmans (strain DSM 17436 / LMG 22146 / PsJN) (Burkholderia phytofirmans).